The following is a 380-amino-acid chain: Flap endonuclease 1 (380 aa).

The tract at residues 1 to 104 (MGIQGLAKLI…GELAKRSERR (104 aa)) is N-domain. Arginine 19 is modified (symmetric dimethylarginine; by PRMT5). Aspartate 34 lines the Mg(2+) pocket. Arginine 47 and arginine 70 together coordinate DNA. Lysine 80 is modified (N6-acetyllysine). Position 86 (aspartate 86) interacts with Mg(2+). Symmetric dimethylarginine; by PRMT5 occurs at positions 100 and 104. An I-domain region spans residues 122–253 (EVEKFTKRLV…KRAVDLIQKH (132 aa)). Mg(2+) contacts are provided by glutamate 158, glutamate 160, aspartate 179, and aspartate 181. Position 158 (glutamate 158) interacts with DNA. At serine 187 the chain carries Phosphoserine; by CDK2. Arginine 192 is modified (symmetric dimethylarginine; by PRMT5). At serine 197 the chain carries Phosphoserine. 2 residues coordinate DNA: glycine 231 and aspartate 233. Aspartate 233 provides a ligand contact to Mg(2+). Residues serine 255, serine 293, and serine 335 each carry the phosphoserine modification. A disordered region spans residues 327–380 (RLSKSRQGSTQGRLDDFFKVTGSLSSAKRKEPEPKGSTKKKAKTGAAGKFKRGK). Threonine 336 is modified (phosphothreonine). Residues 336-344 (TQGRLDDFF) are interaction with PCNA. The residue at position 354 (lysine 354) is an N6-acetyllysine. Residues 363–380 (STKKKAKTGAAGKFKRGK) are compositionally biased toward basic residues. Threonine 364 is subject to Phosphothreonine. N6-acetyllysine occurs at positions 375, 377, and 380.

Belongs to the XPG/RAD2 endonuclease family. FEN1 subfamily. Interacts with PCNA. Three molecules of FEN1 bind to one PCNA trimer with each molecule binding to one PCNA monomer. PCNA stimulates the nuclease activity without altering cleavage specificity. The C-terminal domain binds EP300; can bind simultaneously to both PCNA and EP300. Interacts with DDX11; this interaction is direct and increases flap endonuclease activity of FEN1. Interacts with WDR4; regulating its endonuclease activity. Interacts with POLB. Mg(2+) serves as cofactor. Acetylated by EP300. Acetylation inhibits both endonuclease and exonuclease activity. Acetylation also reduces DNA-binding activity but does not affect interaction with PCNA or EP300. In terms of processing, phosphorylation upon DNA damage induces relocalization to the nuclear plasma. Phosphorylation at Ser-187 by CDK2 occurs during late S-phase and results in dissociation from PCNA. Post-translationally, methylation at Arg-192 by PRMT5 impedes Ser-187 phosphorylation and increases interaction with PCNA.

It localises to the nucleus. The protein resides in the nucleolus. Its subcellular location is the nucleoplasm. It is found in the mitochondrion. Its function is as follows. Structure-specific nuclease with 5'-flap endonuclease and 5'-3' exonuclease activities involved in DNA replication and repair. During DNA replication, cleaves the 5'-overhanging flap structure that is generated by displacement synthesis when DNA polymerase encounters the 5'-end of a downstream Okazaki fragment. It enters the flap from the 5'-end and then tracks to cleave the flap base, leaving a nick for ligation. Also involved in the long patch base excision repair (LP-BER) pathway, by cleaving within the apurinic/apyrimidinic (AP) site-terminated flap. Acts as a genome stabilization factor that prevents flaps from equilibrating into structures that lead to duplications and deletions. Also possesses 5'-3' exonuclease activity on nicked or gapped double-stranded DNA, and exhibits RNase H activity. Also involved in replication and repair of rDNA and in repairing mitochondrial DNA. In Macaca fascicularis (Crab-eating macaque), this protein is Flap endonuclease 1.